The sequence spans 370 residues: Phosphate-binding protein PstS 2 (370 aa).

The first 22 residues, 1 to 22 (MKFARSGAAVSLLAAGTLVLTA), serve as a signal peptide directing secretion. A lipid anchor (N-palmitoyl cysteine) is attached at C23. C23 is lipidated: S-diacylglycerol cysteine. Residues 54-56 (STA), S84, D102, and 191-193 (SGT) each bind phosphate.

Belongs to the PstS family. In terms of assembly, the complex is composed of two ATP-binding proteins (PstB), two transmembrane proteins (PstC and PstA) and a solute-binding protein (PstS).

The protein localises to the cell membrane. In terms of biological role, functions in inorganic phosphate uptake, although probably not the main uptake protein under phosphate starvation. Part of the ABC transporter complex PstSACB involved in phosphate import. This chain is Phosphate-binding protein PstS 2 (pstS2), found in Mycobacterium tuberculosis (strain ATCC 25618 / H37Rv).